Consider the following 573-residue polypeptide: Solute carrier family 41 member 2 (573 aa).

The Extracellular portion of the chain corresponds to 1–162 (MTHSKGRPVT…KESSGVMALQ (162 aa)). 2 positions are modified to phosphoserine: Ser137 and Ser138. Residues 163–183 (ILVPFLLAGFGTVSAGMVLDI) traverse the membrane as a helical segment. Topologically, residues 184 to 195 (VQHWEVFKNVTE) are cytoplasmic. Residues 196–216 (VFILVPALLGLKGNLEMTLAS) form a helical membrane-spanning segment. Over 217–245 (RLSTAVNVGKMDSPIEKWNLIIGNLALKQ) the chain is Extracellular. Residues 246 to 266 (VQATVVGFLAAVAAIILGWIP) traverse the membrane as a helical segment. The Cytoplasmic portion of the chain corresponds to 267–282 (EGKYYLSHSILLCSSS). The helical transmembrane segment at 283-303 (VATAFIASLLQGIIMVGVIVG) threads the bilayer. At 304 to 313 (SKKTGINPDN) the chain is on the extracellular side. Residues 314-334 (VATPIAASFGDLITLAILAWI) traverse the membrane as a helical segment. Topologically, residues 335-347 (SQGLYSCLETYYY) are cytoplasmic. A helical membrane pass occupies residues 348 to 368 (ISPLVCAFFLALTPIWIIIAA). At 369 to 376 (KHPATRTV) the chain is on the extracellular side. The chain crosses the membrane as a helical span at residues 377-397 (LHSGWEPVITAMVISSIGGLI). Residues 398–406 (LDTTVSDPN) lie on the Cytoplasmic side of the membrane. Residues 407–427 (LVGIVVYTPVINGIGGNLVAI) form a helical membrane-spanning segment. Over 428 to 469 (QASRISTYLHLHSIPGELPEEPKGCSYPFRTFFGSGVNNKSA) the chain is Extracellular. A helical membrane pass occupies residues 470–490 (QVLLLFVIPGHLIFLYTIHLM). Topologically, residues 491-498 (KSGHTSLT) are cytoplasmic. Residues 499 to 519 (VVFVVVYLFAAVLQVFTLLWI) form a helical membrane-spanning segment. Over 520 to 543 (ADWMVHRFWRKGKDPDSFSIPYLT) the chain is Extracellular. A helical membrane pass occupies residues 544-564 (ALGDLLGTALLALSFHFLWLI). Residues 565–573 (GDRDGDVGD) are Cytoplasmic-facing.

This sequence belongs to the SLC41A transporter family.

Its subcellular location is the cell membrane. The catalysed reaction is Mg(2+)(in) = Mg(2+)(out). It catalyses the reaction Mn(2+)(in) = Mn(2+)(out). The enzyme catalyses Co(2+)(in) = Co(2+)(out). It carries out the reaction Ni(2+)(in) = Ni(2+)(out). The catalysed reaction is Fe(2+)(in) = Fe(2+)(out). In terms of biological role, acts as a plasma-membrane magnesium transporter. Can also mediate the transport of other divalent metal cations in an order of Ba(2+) &gt; Ni(2+) &gt; Co(2+) &gt; Fe(2+) &gt; Mn(2+). In Mus musculus (Mouse), this protein is Solute carrier family 41 member 2 (Slc41a2).